Here is a 361-residue protein sequence, read N- to C-terminus: Phosphoserine aminotransferase (361 aa).

Residue Arg43 coordinates L-glutamate. Pyridoxal 5'-phosphate contacts are provided by residues 77-78, Trp103, Thr153, Asp173, and Gln196; that span reads AS. Lys197 bears the N6-(pyridoxal phosphate)lysine mark. 238 to 239 is a pyridoxal 5'-phosphate binding site; that stretch reads NT.

This sequence belongs to the class-V pyridoxal-phosphate-dependent aminotransferase family. SerC subfamily. As to quaternary structure, homodimer. Pyridoxal 5'-phosphate serves as cofactor.

It is found in the cytoplasm. The enzyme catalyses O-phospho-L-serine + 2-oxoglutarate = 3-phosphooxypyruvate + L-glutamate. The catalysed reaction is 4-(phosphooxy)-L-threonine + 2-oxoglutarate = (R)-3-hydroxy-2-oxo-4-phosphooxybutanoate + L-glutamate. The protein operates within amino-acid biosynthesis; L-serine biosynthesis; L-serine from 3-phospho-D-glycerate: step 2/3. It participates in cofactor biosynthesis; pyridoxine 5'-phosphate biosynthesis; pyridoxine 5'-phosphate from D-erythrose 4-phosphate: step 3/5. Functionally, catalyzes the reversible conversion of 3-phosphohydroxypyruvate to phosphoserine and of 3-hydroxy-2-oxo-4-phosphonooxybutanoate to phosphohydroxythreonine. The protein is Phosphoserine aminotransferase of Pseudomonas aeruginosa (strain ATCC 15692 / DSM 22644 / CIP 104116 / JCM 14847 / LMG 12228 / 1C / PRS 101 / PAO1).